The primary structure comprises 440 residues: tRNA modification GTPase MnmE (440 aa).

Residues Arg-34, Glu-94, and Arg-134 each contribute to the (6S)-5-formyl-5,6,7,8-tetrahydrofolate site. A TrmE-type G domain is found at 229-367; that stretch reads GVRVVLAGPP…LVALLLDRAA (139 aa). Asn-239 provides a ligand contact to K(+). GTP is bound by residues 239 to 244, 258 to 264, 283 to 286, and 348 to 350; these read NAGKST, TPIAGTT, DTAG, and SAR. Ser-243 lines the Mg(2+) pocket. 3 residues coordinate K(+): Thr-258, Ile-260, and Thr-263. Thr-264 is a Mg(2+) binding site. Residue Lys-440 participates in (6S)-5-formyl-5,6,7,8-tetrahydrofolate binding.

This sequence belongs to the TRAFAC class TrmE-Era-EngA-EngB-Septin-like GTPase superfamily. TrmE GTPase family. In terms of assembly, homodimer. Heterotetramer of two MnmE and two MnmG subunits. Requires K(+) as cofactor.

The protein localises to the cytoplasm. In terms of biological role, exhibits a very high intrinsic GTPase hydrolysis rate. Involved in the addition of a carboxymethylaminomethyl (cmnm) group at the wobble position (U34) of certain tRNAs, forming tRNA-cmnm(5)s(2)U34. In Rhizorhabdus wittichii (strain DSM 6014 / CCUG 31198 / JCM 15750 / NBRC 105917 / EY 4224 / RW1) (Sphingomonas wittichii), this protein is tRNA modification GTPase MnmE.